The sequence spans 546 residues: Choline oxidase (546 aa).

FAD contacts are provided by residues 23 to 24 (SA), Glu44, Trp71, 90 to 92 (AKV), 96 to 103 (CSSHNSCI), Ala232, and Tyr465. His99 is modified (tele-8alpha-FAD histidine). The Proton acceptor role is filled by His466. Residues Ala500 and 510-512 (NPN) contribute to the FAD site.

It belongs to the GMC oxidoreductase family. In terms of assembly, homodimer. Requires FAD as cofactor.

It catalyses the reaction choline + 2 O2 + H2O = glycine betaine + 2 H2O2 + H(+). It participates in amine and polyamine biosynthesis; betaine biosynthesis via choline pathway; betaine from choline: step 1/1. Catalyzes the two-step oxidative conversion of choline to glycine-betaine with betaine aldehyde as an intermediate. Glycine-betaine accumulates to high levels in the cytoplasm of cells to prevent dehydration and plasmolysis in adverse hyperosmotic environments. Accepts either choline or the reaction intermediate betaine-aldehyde as substrate. This chain is Choline oxidase (codA), found in Arthrobacter globiformis.